We begin with the raw amino-acid sequence, 505 residues long: 2,3-bisphosphoglycerate-independent phosphoglycerate mutase (505 aa).

Positions 12 and 62 each coordinate Mn(2+). Catalysis depends on Ser-62, which acts as the Phosphoserine intermediate. Substrate-binding positions include His-123, 153 to 154, Arg-185, Arg-191, 257 to 260, and Lys-330; these read RD and RPDR. Asp-397, His-401, Asp-438, His-439, and His-456 together coordinate Mn(2+).

The protein belongs to the BPG-independent phosphoglycerate mutase family. In terms of assembly, monomer. Mn(2+) is required as a cofactor.

It carries out the reaction (2R)-2-phosphoglycerate = (2R)-3-phosphoglycerate. Its pathway is carbohydrate degradation; glycolysis; pyruvate from D-glyceraldehyde 3-phosphate: step 3/5. Catalyzes the interconversion of 2-phosphoglycerate and 3-phosphoglycerate. This Staphylococcus aureus (strain MRSA252) protein is 2,3-bisphosphoglycerate-independent phosphoglycerate mutase.